Reading from the N-terminus, the 226-residue chain is Small ribosomal subunit protein uS5 (226 aa).

Polar residues predominate over residues 1-18 (MAAPQRSRTTGAPSSGGP). The segment at 1–45 (MAAPQRSRTTGAPSSGGPSENERGRGGDRRGGDRRGGDRRGGDDR) is disordered. Positions 20–45 (ENERGRGGDRRGGDRRGGDRRGGDDR) are enriched in basic and acidic residues. The S5 DRBM domain maps to 48–111 (FVERVVTINR…EEAKKNFFRV (64 aa)).

This sequence belongs to the universal ribosomal protein uS5 family. Part of the 30S ribosomal subunit. Contacts proteins S4 and S8.

Functionally, with S4 and S12 plays an important role in translational accuracy. In terms of biological role, located at the back of the 30S subunit body where it stabilizes the conformation of the head with respect to the body. This Beutenbergia cavernae (strain ATCC BAA-8 / DSM 12333 / CCUG 43141 / JCM 11478 / NBRC 16432 / NCIMB 13614 / HKI 0122) protein is Small ribosomal subunit protein uS5.